The primary structure comprises 161 residues: 2-C-methyl-D-erythritol 2,4-cyclodiphosphate synthase (161 aa).

Asp10 and His12 together coordinate a divalent metal cation. 4-CDP-2-C-methyl-D-erythritol 2-phosphate-binding positions include 10–12 (DVH) and 36–37 (HS). His44 provides a ligand contact to a divalent metal cation. 4-CDP-2-C-methyl-D-erythritol 2-phosphate is bound by residues 58–60 (DIG), 63–67 (FPDTD), 102–108 (AQVPKMA), 134–137 (TTTE), Phe141, and Arg144.

This sequence belongs to the IspF family. In terms of assembly, homotrimer. The cofactor is a divalent metal cation.

The enzyme catalyses 4-CDP-2-C-methyl-D-erythritol 2-phosphate = 2-C-methyl-D-erythritol 2,4-cyclic diphosphate + CMP. The protein operates within isoprenoid biosynthesis; isopentenyl diphosphate biosynthesis via DXP pathway; isopentenyl diphosphate from 1-deoxy-D-xylulose 5-phosphate: step 4/6. Its function is as follows. Involved in the biosynthesis of isopentenyl diphosphate (IPP) and dimethylallyl diphosphate (DMAPP), two major building blocks of isoprenoid compounds. Catalyzes the conversion of 4-diphosphocytidyl-2-C-methyl-D-erythritol 2-phosphate (CDP-ME2P) to 2-C-methyl-D-erythritol 2,4-cyclodiphosphate (ME-CPP) with a corresponding release of cytidine 5-monophosphate (CMP). The polypeptide is 2-C-methyl-D-erythritol 2,4-cyclodiphosphate synthase (Shewanella baltica (strain OS223)).